A 448-amino-acid chain; its full sequence is Enolase (448 aa).

(2R)-2-phosphoglycerate is bound at residue Q164. The active-site Proton donor is E206. Mg(2+) is bound by residues D243, E289, and D316. Residues K341, R370, S371, and K392 each contribute to the (2R)-2-phosphoglycerate site. K341 (proton acceptor) is an active-site residue.

Belongs to the enolase family. It depends on Mg(2+) as a cofactor.

It localises to the cytoplasm. Its subcellular location is the secreted. The protein localises to the cell surface. The enzyme catalyses (2R)-2-phosphoglycerate = phosphoenolpyruvate + H2O. It participates in carbohydrate degradation; glycolysis; pyruvate from D-glyceraldehyde 3-phosphate: step 4/5. Functionally, catalyzes the reversible conversion of 2-phosphoglycerate (2-PG) into phosphoenolpyruvate (PEP). It is essential for the degradation of carbohydrates via glycolysis. The chain is Enolase from Oenococcus oeni (strain ATCC BAA-331 / PSU-1).